An 89-amino-acid polypeptide reads, in one-letter code: Small ribosomal subunit protein uS15 (89 aa).

Residues 1-21 (MALSPEKKNEIIENFKTHEGD) are compositionally biased toward basic and acidic residues. Residues 1 to 23 (MALSPEKKNEIIENFKTHEGDTG) form a disordered region.

The protein belongs to the universal ribosomal protein uS15 family. Part of the 30S ribosomal subunit. Forms a bridge to the 50S subunit in the 70S ribosome, contacting the 23S rRNA.

Functionally, one of the primary rRNA binding proteins, it binds directly to 16S rRNA where it helps nucleate assembly of the platform of the 30S subunit by binding and bridging several RNA helices of the 16S rRNA. Forms an intersubunit bridge (bridge B4) with the 23S rRNA of the 50S subunit in the ribosome. In Desulforamulus reducens (strain ATCC BAA-1160 / DSM 100696 / MI-1) (Desulfotomaculum reducens), this protein is Small ribosomal subunit protein uS15.